A 1013-amino-acid polypeptide reads, in one-letter code: Adhesion G-protein coupled receptor G2 (1013 aa).

Positions 1–37 (MLFSGGQYSPVGRPEEVLLIYKIFLVIICFHAILVTS) are cleaved as a signal peptide. At 38–623 (LKENAGNSSL…TSLPPSQMMA (586 aa)) the chain is on the extracellular side. Residues asparagine 44, asparagine 78, asparagine 92, asparagine 104, asparagine 128, asparagine 137, asparagine 155, asparagine 179, asparagine 187, asparagine 366, asparagine 431, asparagine 452, asparagine 457, asparagine 524, asparagine 538, asparagine 543, asparagine 547, and asparagine 593 are each glycosylated (N-linked (GlcNAc...) asparagine). Residues 457-615 (NTTTFAAQDP…GILLDLSRTS (159 aa)) enclose the GAIN-B domain. Intrachain disulfides connect cysteine 566–cysteine 597 and cysteine 585–cysteine 599. Residues 566–615 (CVFWDLNRNGGRGGWSSDGCSVKEKRMNETICTCSHLTSFGILLDLSRTS) form a GPS region. Residues 604 to 615 (SFGILLDLSRTS) are stachel. The helical transmembrane segment at 624–644 (LTFITYIGCGLSSIFLSVTLV) threads the bilayer. The Cytoplasmic segment spans residues 645–663 (TYIAFEKIRRDYPSKILIQ). The chain crosses the membrane as a helical span at residues 664–684 (LCAALLLLNLVFLLDSWIALY). The Extracellular segment spans residues 685 to 688 (NARG). Residues 689 to 709 (FCISVAVFLHYFLLVSFTWMG) traverse the membrane as a helical segment. The cysteines at positions 690 and 774 are disulfide-linked. Topologically, residues 710-733 (LEAFHMYLALVKVFNTYIRKYILK) are cytoplasmic. Residues 734 to 754 (FCIVGWGIPAVVVSIVLTISP) form a helical membrane-spanning segment. The Extracellular segment spans residues 755-785 (DNYGIGSYGKFPNGTPDDFCWINSSVVFYIT). Asparagine 777 is a glycosylation site (N-linked (GlcNAc...) asparagine). Residues 786 to 806 (VVGYFCVIFLLNVSMFIVVLV) traverse the membrane as a helical segment. Residues 807–830 (QLCRIKKKKQLGAQRKTSIQDLRS) lie on the Cytoplasmic side of the membrane. A helical membrane pass occupies residues 831-851 (IAGLTFLLGITWGFAFFAWGP). Topologically, residues 852 to 853 (VN) are extracellular. Asparagine 853 carries N-linked (GlcNAc...) asparagine glycosylation. Residues 854 to 874 (LTFMYLFAIFNTLQGFFIFIF) form a helical membrane-spanning segment. Residue asparagine 864 coordinates 3beta-hydroxyandrost-5-en-17-one. Residues 875 to 1013 (YCAAKENVRK…RGSLHFIEQM (139 aa)) are Cytoplasmic-facing. Serine 1006 bears the Phosphoserine mark.

It belongs to the G-protein coupled receptor 2 family. Adhesion G-protein coupled receptor (ADGR) subfamily. As to quaternary structure, heterodimer of 2 chains generated by proteolytic processing; the large extracellular N-terminal fragment and the membrane-bound C-terminal fragment predominantly remain associated and non-covalently linked. Interacts with CFTR. In terms of processing, proteolytically cleaved into 2 subunits, an extracellular subunit and a seven-transmembrane subunit. Post-translationally, highly glycosylated. Epididymis-specific expression (at protein level). Associated with apical membranes of efferent ductule and proximal epididymal duct epithelia.

Its subcellular location is the apical cell membrane. Its activity is regulated as follows. Forms a heterodimer of 2 chains generated by proteolytic processing that remain associated through non-covalent interactions mediated by the GAIN-B domain. In the inactivated receptor, the Stachel sequence (also named stalk) is embedded in the GAIN-B domain, where it adopts a beta-strand conformation. On activation, the Stachel moves into the 7 transmembrane region and adopts a twisted hook-shaped configuration that forms contacts within the receptor, leading to coupling of a G-alpha protein, which activates signaling. The cleaved GAIN-B and N-terminal domains can then dissociate from the rest of the receptor. Deoxycorticosterone (DOC) acts as an antagonist of ADGRG2. In terms of biological role, adhesion G-protein coupled receptor (aGPCR) for steroid hormones, such as dehydroepiandrosterone (DHEA; also named 3beta-hydroxyandrost-5-en-17-one) and androstenedione. Involved in a signal transduction pathway controlling epididymal function and male fertility. Ligand binding causes a conformation change that triggers signaling via guanine nucleotide-binding proteins (G proteins) and modulates the activity of downstream effectors, such as adenylate cyclase. ADGRG2 is coupled to G(s) G proteins and mediates activation of adenylate cyclase activity. Also able to couple with G(q) G proteins in vitro. May regulate fluid exchange within epididymis. This Rattus norvegicus (Rat) protein is Adhesion G-protein coupled receptor G2.